Consider the following 557-residue polypeptide: Urocanate hydratase (557 aa).

The segment at 1-20 is disordered; it reads MSNPRHNEREVRSPRGDELN. NAD(+)-binding positions include 52–53, Gln-130, 176–178, Glu-196, Arg-201, 242–243, 263–267, 273–274, and Tyr-322; these read GG, GMG, NA, QTSAH, and YL. Cys-410 is a catalytic residue. Position 492 (Gly-492) interacts with NAD(+).

Belongs to the urocanase family. NAD(+) serves as cofactor.

The protein resides in the cytoplasm. It catalyses the reaction 4-imidazolone-5-propanoate = trans-urocanate + H2O. Its pathway is amino-acid degradation; L-histidine degradation into L-glutamate; N-formimidoyl-L-glutamate from L-histidine: step 2/3. In terms of biological role, catalyzes the conversion of urocanate to 4-imidazolone-5-propionate. This chain is Urocanate hydratase, found in Brucella melitensis biotype 1 (strain ATCC 23456 / CCUG 17765 / NCTC 10094 / 16M).